A 259-amino-acid polypeptide reads, in one-letter code: Thiazole synthase (259 aa).

The active-site Schiff-base intermediate with DXP is the lysine 98. Residues glycine 159, 185-186 (AG), and 207-208 (NS) each bind 1-deoxy-D-xylulose 5-phosphate.

This sequence belongs to the ThiG family. In terms of assembly, homotetramer. Forms heterodimers with either ThiH or ThiS.

Its subcellular location is the cytoplasm. It carries out the reaction [ThiS sulfur-carrier protein]-C-terminal-Gly-aminoethanethioate + 2-iminoacetate + 1-deoxy-D-xylulose 5-phosphate = [ThiS sulfur-carrier protein]-C-terminal Gly-Gly + 2-[(2R,5Z)-2-carboxy-4-methylthiazol-5(2H)-ylidene]ethyl phosphate + 2 H2O + H(+). It functions in the pathway cofactor biosynthesis; thiamine diphosphate biosynthesis. Its function is as follows. Catalyzes the rearrangement of 1-deoxy-D-xylulose 5-phosphate (DXP) to produce the thiazole phosphate moiety of thiamine. Sulfur is provided by the thiocarboxylate moiety of the carrier protein ThiS. In vitro, sulfur can be provided by H(2)S. This chain is Thiazole synthase, found in Chlorobium phaeobacteroides (strain BS1).